A 329-amino-acid polypeptide reads, in one-letter code: 4-hydroxythreonine-4-phosphate dehydrogenase (329 aa).

The substrate site is built by histidine 137 and threonine 138. Residues histidine 167, histidine 212, and histidine 267 each contribute to the a divalent metal cation site. Residues lysine 275, asparagine 284, and arginine 293 each coordinate substrate.

The protein belongs to the PdxA family. In terms of assembly, homodimer. Zn(2+) is required as a cofactor. Mg(2+) serves as cofactor. Requires Co(2+) as cofactor.

The protein resides in the cytoplasm. It catalyses the reaction 4-(phosphooxy)-L-threonine + NAD(+) = 3-amino-2-oxopropyl phosphate + CO2 + NADH. Its pathway is cofactor biosynthesis; pyridoxine 5'-phosphate biosynthesis; pyridoxine 5'-phosphate from D-erythrose 4-phosphate: step 4/5. Catalyzes the NAD(P)-dependent oxidation of 4-(phosphooxy)-L-threonine (HTP) into 2-amino-3-oxo-4-(phosphooxy)butyric acid which spontaneously decarboxylates to form 3-amino-2-oxopropyl phosphate (AHAP). This is 4-hydroxythreonine-4-phosphate dehydrogenase from Stutzerimonas stutzeri (strain A1501) (Pseudomonas stutzeri).